We begin with the raw amino-acid sequence, 163 residues long: Interleukin-17F (163 aa).

Positions 1 to 30 (MTVKSLHVTAMVKYLLLLILGLAFLRETAA) are cleaved as a signal peptide. N-linked (GlcNAc...) asparagine glycosylation is present at Asn83. 2 disulfides stabilise this stretch: Cys102-Cys152 and Cys107-Cys154.

Belongs to the IL-17 family. Homodimer; disulfide-linked. Heterodimer with IL17A (IL17A-IL17F). Forms complexes with IL17RA and IL17RC receptors with 2:1 binding stoichiometry: two receptor chains for one interleukin molecule. IL17F homodimer forms predominantly complexes with IL17RC homodimer, whereas IL17A-IL17F favors complexes with IL17RA-IL17RC. IL17RA and IL17RC chains cannot distinguish between IL17A and IL17F molecules, potentially enabling the formation of topologically distinct complexes.

The protein localises to the secreted. In terms of biological role, effector cytokine of innate and adaptive immune system involved in antimicrobial host defense and maintenance of tissue integrity. IL17A-IL17F signals via IL17RA-IL17RC heterodimeric receptor complex, triggering homotypic interaction of IL17RA and IL17RC chains with TRAF3IP2 adapter through SEFIR domains. This leads to downstream TRAF6-mediated activation of NF-kappa-B and MAPkinase pathways ultimately resulting in transcriptional activation of cytokines, chemokines, antimicrobial peptides and matrix metalloproteinases, with potential strong immune inflammation. IL17A-IL17F is primarily involved in host defense against extracellular bacteria and fungi by inducing neutrophilic inflammation. As signature effector cytokine of T-helper 17 cells (Th17), primarily induces neutrophil activation and recruitment at infection and inflammatory sites. Stimulates the production of antimicrobial beta-defensins DEFB1, DEFB103A, and DEFB104A by mucosal epithelial cells, limiting the entry of microbes through the epithelial barriers. IL17F homodimer can signal via IL17RC homodimeric receptor complex, triggering downstream activation of TRAF6 and NF-kappa-B signaling pathway. Via IL17RC induces transcriptional activation of IL33, a potent cytokine that stimulates group 2 innate lymphoid cells and adaptive T-helper 2 cells involved in pulmonary allergic response to fungi. Likely via IL17RC, promotes sympathetic innervation of peripheral organs by coordinating the communication between gamma-delta T cells and parenchymal cells. Stimulates sympathetic innervation of thermogenic adipose tissue by driving TGFB1 expression. Regulates the composition of intestinal microbiota and immune tolerance by inducing antimicrobial proteins that specifically control the growth of commensal Firmicutes and Bacteroidetes. The chain is Interleukin-17F (IL17F) from Callithrix jacchus (White-tufted-ear marmoset).